The sequence spans 224 residues: Inhibitor of apoptosis protein (224 aa).

One copy of the BIR repeat lies at 29–92 (VDARNQSFAI…GFWSRNCGFM (64 aa)). Zn(2+) is bound by residues cysteine 62, cysteine 65, histidine 82, and cysteine 89. The segment at 189–207 (CMTCGIEPIKKDENFCNAC) adopts a C4-type zinc-finger fold.

It belongs to the asfivirus IAP family. As to quaternary structure, interacts with subunit p17 of host CASP3.

It is found in the host cytoplasm. Its subcellular location is the virion. Its function is as follows. Prevent apoptosis of host cell by inhibiting caspase-3/CASP3 activation to promote the viral replication. Also induces the activation of host NF-kappaB. In Ornithodoros (relapsing fever ticks), this protein is Inhibitor of apoptosis protein.